A 274-amino-acid polypeptide reads, in one-letter code: MPYYICNTCGVQHAQTVDPPNSCLICEDERQYIHPDGQTWTTLEDMREKGNLQNILKKEEEHLYSIKTEPEFAIGQTAHLIQHKGFNVLWDCMTYLDQKTIDQINELGGIQAIALSHPHYYSTQVEWAEAFQAPIYIHEDDKEWVTRPSNHIHFWSGETLNMKPGLDLYRLGGHFKGGAVLHWSKGNEGKGCLLTGDIITVAADRNWVSFMYSYPNLIPLPASKVEEIAAKVKPLQFNRLYNAFSKVVKENADESVQRSAVRYIKALNSELFHT.

This is an uncharacterized protein from Bacillus subtilis (strain 168).